Reading from the N-terminus, the 385-residue chain is tRNA-specific 2-thiouridylase MnmA (385 aa).

Residues 30 to 37 (GMSGGVDS) and Met56 each bind ATP. Residues 118 to 120 (NPD) are interaction with target base in tRNA. Cys123 acts as the Nucleophile in catalysis. Cys123 and Cys220 are disulfide-bonded. Gly148 contacts ATP. An interaction with tRNA region spans residues 170–172 (KDQ). Cys220 (cysteine persulfide intermediate) is an active-site residue. The segment at 332–333 (RY) is interaction with tRNA.

Belongs to the MnmA/TRMU family.

It localises to the cytoplasm. It carries out the reaction S-sulfanyl-L-cysteinyl-[protein] + uridine(34) in tRNA + AH2 + ATP = 2-thiouridine(34) in tRNA + L-cysteinyl-[protein] + A + AMP + diphosphate + H(+). Catalyzes the 2-thiolation of uridine at the wobble position (U34) of tRNA, leading to the formation of s(2)U34. This Haemophilus influenzae (strain PittGG) protein is tRNA-specific 2-thiouridylase MnmA.